Here is an 85-residue protein sequence, read N- to C-terminus: UPF0297 protein lhv_0439 (85 aa).

Belongs to the UPF0297 family.

This is UPF0297 protein lhv_0439 from Lactobacillus helveticus (strain DPC 4571).